Consider the following 334-residue polypeptide: DnaJ protein homolog 1 (334 aa).

Positions aspartate 4–glycine 68 constitute a J domain. Serine 187 is subject to Phosphoserine.

The protein localises to the cytoplasm. The chain is DnaJ protein homolog 1 (DnaJ-1) from Drosophila melanogaster (Fruit fly).